Consider the following 212-residue polypeptide: ATP-dependent Clp protease proteolytic subunit (212 aa).

The active-site Nucleophile is Ser114. His139 is a catalytic residue.

This sequence belongs to the peptidase S14 family. Fourteen ClpP subunits assemble into 2 heptameric rings which stack back to back to give a disk-like structure with a central cavity, resembling the structure of eukaryotic proteasomes.

It localises to the cytoplasm. It catalyses the reaction Hydrolysis of proteins to small peptides in the presence of ATP and magnesium. alpha-casein is the usual test substrate. In the absence of ATP, only oligopeptides shorter than five residues are hydrolyzed (such as succinyl-Leu-Tyr-|-NHMec, and Leu-Tyr-Leu-|-Tyr-Trp, in which cleavage of the -Tyr-|-Leu- and -Tyr-|-Trp bonds also occurs).. Functionally, cleaves peptides in various proteins in a process that requires ATP hydrolysis. Has a chymotrypsin-like activity. Plays a major role in the degradation of misfolded proteins. This is ATP-dependent Clp protease proteolytic subunit from Laribacter hongkongensis (strain HLHK9).